Consider the following 105-residue polypeptide: Ketoisovalerate oxidoreductase subunit VorD (105 aa).

2 consecutive 4Fe-4S ferredoxin-type domains span residues 44–73 (FMPV…IKED) and 74–103 (GFVA…MVRE). Cys-53, Cys-56, Cys-59, Cys-63, Cys-83, Cys-86, Cys-89, and Cys-93 together coordinate [4Fe-4S] cluster.

In terms of assembly, heterotetramer of one alpha, one beta, one delta and one gamma chain. Requires [4Fe-4S] cluster as cofactor.

It carries out the reaction 3-methyl-2-oxobutanoate + 2 oxidized [2Fe-2S]-[ferredoxin] + CoA = 2-methylpropanoyl-CoA + 2 reduced [2Fe-2S]-[ferredoxin] + CO2 + H(+). This Pyrococcus horikoshii (strain ATCC 700860 / DSM 12428 / JCM 9974 / NBRC 100139 / OT-3) protein is Ketoisovalerate oxidoreductase subunit VorD (vorD).